The following is a 288-amino-acid chain: Acetyl-coenzyme A carboxylase carboxyl transferase subunit beta (288 aa).

A CoA carboxyltransferase N-terminal domain is found at 33–288; that stretch reads LFSQCPGCKH…LVRLHGGSPR (256 aa). C37, C40, C55, and C58 together coordinate Zn(2+). A C4-type zinc finger spans residues 37-58; that stretch reads CPGCKHTIYQKDLGSERICPHC.

The protein belongs to the AccD/PCCB family. In terms of assembly, acetyl-CoA carboxylase is a heterohexamer composed of biotin carboxyl carrier protein (AccB), biotin carboxylase (AccC) and two subunits each of ACCase subunit alpha (AccA) and ACCase subunit beta (AccD). Requires Zn(2+) as cofactor.

Its subcellular location is the cytoplasm. The enzyme catalyses N(6)-carboxybiotinyl-L-lysyl-[protein] + acetyl-CoA = N(6)-biotinyl-L-lysyl-[protein] + malonyl-CoA. It functions in the pathway lipid metabolism; malonyl-CoA biosynthesis; malonyl-CoA from acetyl-CoA: step 1/1. Its function is as follows. Component of the acetyl coenzyme A carboxylase (ACC) complex. Biotin carboxylase (BC) catalyzes the carboxylation of biotin on its carrier protein (BCCP) and then the CO(2) group is transferred by the transcarboxylase to acetyl-CoA to form malonyl-CoA. The protein is Acetyl-coenzyme A carboxylase carboxyl transferase subunit beta of Streptococcus pneumoniae serotype 4 (strain ATCC BAA-334 / TIGR4).